The primary structure comprises 176 residues: Protein GrpE (176 aa).

It belongs to the GrpE family. As to quaternary structure, homodimer.

It is found in the cytoplasm. Its function is as follows. Participates actively in the response to hyperosmotic and heat shock by preventing the aggregation of stress-denatured proteins, in association with DnaK and GrpE. It is the nucleotide exchange factor for DnaK and may function as a thermosensor. Unfolded proteins bind initially to DnaJ; upon interaction with the DnaJ-bound protein, DnaK hydrolyzes its bound ATP, resulting in the formation of a stable complex. GrpE releases ADP from DnaK; ATP binding to DnaK triggers the release of the substrate protein, thus completing the reaction cycle. Several rounds of ATP-dependent interactions between DnaJ, DnaK and GrpE are required for fully efficient folding. The sequence is that of Protein GrpE from Thermoplasma volcanium (strain ATCC 51530 / DSM 4299 / JCM 9571 / NBRC 15438 / GSS1).